Consider the following 332-residue polypeptide: GLIPR1-like protein 2 (332 aa).

The 135-residue stretch at 57 to 191 folds into the SCP domain; sequence LHNELRGTVF…THAALFICNY (135 aa). Asparagine 145 carries N-linked (GlcNAc...) asparagine glycosylation. A helical transmembrane segment spans residues 253–273; it reads IFILFLRVASLLLCVIVVLIV. The tract at residues 293–332 is disordered; that stretch reads EGKTEVEIVMEEGEGEGEGGEGEGEGEEKEEEEMLEEDEQ. A compositionally biased stretch (acidic residues) spans 300–332; that stretch reads IVMEEGEGEGEGGEGEGEGEEKEEEEMLEEDEQ.

It belongs to the CRISP family.

Its subcellular location is the membrane. The chain is GLIPR1-like protein 2 (Glipr1l2) from Mus musculus (Mouse).